A 112-amino-acid chain; its full sequence is Large ribosomal subunit protein bL17 (112 aa).

This sequence belongs to the bacterial ribosomal protein bL17 family. In terms of assembly, part of the 50S ribosomal subunit. Contacts protein L32.

The polypeptide is Large ribosomal subunit protein bL17 (Carboxydothermus hydrogenoformans (strain ATCC BAA-161 / DSM 6008 / Z-2901)).